The following is a 523-amino-acid chain: Cyclin-dependent kinase 17 (523 aa).

S9 bears the Phosphoserine mark. Residues 31-55 form a disordered region; sequence IEESSSKDNEPIVKNGRPPTSHSMH. Phosphoserine is present on residues S80, S92, and S105. Positions 103-123 are disordered; it reads MGSDGESDQASGTSSDEVQSP. Over residues 110-123 the composition is skewed to polar residues; the sequence is DQASGTSSDEVQSP. A phosphoserine mark is found at S137, S146, S165, and S180. In terms of domain architecture, Protein kinase spans 192 to 473; that stretch reads YIKLEKLGEG…AEEAMKHVYF (282 aa). ATP contacts are provided by residues 198–206 and K221; that span reads LGEGTYATV. The active-site Proton acceptor is D313.

This sequence belongs to the protein kinase superfamily. CMGC Ser/Thr protein kinase family. CDC2/CDKX subfamily. As to quaternary structure, found in a complex containing CABLES1, CDK16 and TDRD7. Interacts with TDRD7. In terms of tissue distribution, brain specific. Within the brain it is concentrated in the neuronal layers of the hippocampus and olfactory bulb, which mostly consist of post-mitotic neurons.

The enzyme catalyses L-seryl-[protein] + ATP = O-phospho-L-seryl-[protein] + ADP + H(+). It catalyses the reaction L-threonyl-[protein] + ATP = O-phospho-L-threonyl-[protein] + ADP + H(+). In terms of biological role, may play a role in terminally differentiated neurons. Has a Ser/Thr-phosphorylating activity for histone H1. The protein is Cyclin-dependent kinase 17 (Cdk17) of Rattus norvegicus (Rat).